Consider the following 580-residue polypeptide: Peptidyl-prolyl cis-trans isomerase-like 2 (580 aa).

The 74-residue stretch at K42–K115 folds into the U-box domain. Disordered regions lie at residues I182–S201, Q227–S259, S439–P459, Q479–T530, and F553–D580. The PPIase cyclophilin-type domain occupies Q309–I468. Polar residues predominate over residues S439 to P457. Positions E490–D507 are enriched in basic and acidic residues.

The protein belongs to the cyclophilin-type PPIase family. PPIL2 subfamily.

The protein localises to the nucleus. It carries out the reaction [protein]-peptidylproline (omega=180) = [protein]-peptidylproline (omega=0). The catalysed reaction is S-ubiquitinyl-[E2 ubiquitin-conjugating enzyme]-L-cysteine + [acceptor protein]-L-lysine = [E2 ubiquitin-conjugating enzyme]-L-cysteine + N(6)-ubiquitinyl-[acceptor protein]-L-lysine.. It functions in the pathway protein modification; protein ubiquitination. In terms of biological role, may catalyze the cis-trans isomerization of proline imidic peptide bonds in oligopeptides thereby assisting the folding of proteins. May also function as a chaperone, playing a role in intracellular transport of proteins. May also have a protein ubiquitin ligase activity acting as an E3 ubiquitin protein ligase or as a ubiquitin-ubiquitin ligase promoting elongation of ubiquitin chains on proteins. The sequence is that of Peptidyl-prolyl cis-trans isomerase-like 2 (cyp8) from Emericella nidulans (strain FGSC A4 / ATCC 38163 / CBS 112.46 / NRRL 194 / M139) (Aspergillus nidulans).